Consider the following 429-residue polypeptide: Arginine biosynthesis bifunctional protein ArgJ (429 aa).

Threonine 181, lysine 207, threonine 218, glutamate 302, asparagine 424, and serine 429 together coordinate substrate. Catalysis depends on threonine 218, which acts as the Nucleophile.

This sequence belongs to the ArgJ family. In terms of assembly, heterotetramer of two alpha and two beta chains.

The protein localises to the cytoplasm. It catalyses the reaction N(2)-acetyl-L-ornithine + L-glutamate = N-acetyl-L-glutamate + L-ornithine. The enzyme catalyses L-glutamate + acetyl-CoA = N-acetyl-L-glutamate + CoA + H(+). The protein operates within amino-acid biosynthesis; L-arginine biosynthesis; L-ornithine and N-acetyl-L-glutamate from L-glutamate and N(2)-acetyl-L-ornithine (cyclic): step 1/1. It participates in amino-acid biosynthesis; L-arginine biosynthesis; N(2)-acetyl-L-ornithine from L-glutamate: step 1/4. Its function is as follows. Catalyzes two activities which are involved in the cyclic version of arginine biosynthesis: the synthesis of N-acetylglutamate from glutamate and acetyl-CoA as the acetyl donor, and of ornithine by transacetylation between N(2)-acetylornithine and glutamate. This is Arginine biosynthesis bifunctional protein ArgJ from Chlorobium chlorochromatii (strain CaD3).